Consider the following 188-residue polypeptide: Ribosome-recycling factor (188 aa).

The protein belongs to the RRF family.

It localises to the cytoplasm. Responsible for the release of ribosomes from messenger RNA at the termination of protein biosynthesis. May increase the efficiency of translation by recycling ribosomes from one round of translation to another. This is Ribosome-recycling factor from Caulobacter sp. (strain K31).